Here is an 875-residue protein sequence, read N- to C-terminus: Phosphoenolpyruvate carboxylase (875 aa).

Catalysis depends on residues H137 and K542.

This sequence belongs to the PEPCase type 1 family. Requires Mg(2+) as cofactor.

It carries out the reaction oxaloacetate + phosphate = phosphoenolpyruvate + hydrogencarbonate. In terms of biological role, forms oxaloacetate, a four-carbon dicarboxylic acid source for the tricarboxylic acid cycle. This chain is Phosphoenolpyruvate carboxylase, found in Pseudomonas entomophila (strain L48).